The primary structure comprises 207 residues: dTTP/UTP pyrophosphatase (207 aa).

The active-site Proton acceptor is D87.

Belongs to the Maf family. YhdE subfamily. It depends on a divalent metal cation as a cofactor.

Its subcellular location is the cytoplasm. The catalysed reaction is dTTP + H2O = dTMP + diphosphate + H(+). It carries out the reaction UTP + H2O = UMP + diphosphate + H(+). Functionally, nucleoside triphosphate pyrophosphatase that hydrolyzes dTTP and UTP. May have a dual role in cell division arrest and in preventing the incorporation of modified nucleotides into cellular nucleic acids. This Bordetella bronchiseptica (strain ATCC BAA-588 / NCTC 13252 / RB50) (Alcaligenes bronchisepticus) protein is dTTP/UTP pyrophosphatase.